Consider the following 192-residue polypeptide: Orotate phosphoribosyltransferase (192 aa).

Residues R102, K103, K106, and 129–137 each bind 5-phospho-alpha-D-ribose 1-diphosphate; that span reads EDVVTTGRS. 2 residues coordinate orotate: T133 and R161.

Belongs to the purine/pyrimidine phosphoribosyltransferase family. PyrE subfamily. In terms of assembly, homodimer. The cofactor is Mg(2+).

The enzyme catalyses orotidine 5'-phosphate + diphosphate = orotate + 5-phospho-alpha-D-ribose 1-diphosphate. The protein operates within pyrimidine metabolism; UMP biosynthesis via de novo pathway; UMP from orotate: step 1/2. Its function is as follows. Catalyzes the transfer of a ribosyl phosphate group from 5-phosphoribose 1-diphosphate to orotate, leading to the formation of orotidine monophosphate (OMP). This is Orotate phosphoribosyltransferase from Prochlorococcus marinus (strain SARG / CCMP1375 / SS120).